The chain runs to 115 residues: General stress protein 17M (115 aa).

The protein is General stress protein 17M (yflT) of Bacillus subtilis (strain 168).